The sequence spans 316 residues: Apolipoprotein E (316 aa).

Positions 1–18 are cleaved as a signal peptide; it reads MKALWAVLVVTLLAGCLA. Repeat copies occupy residues 76–97, 98–119, 120–141, 142–163, 164–185, 186–207, 208–229, and 230–251. Positions 76-251 are 8 X 22 AA approximate tandem repeats; it reads VLMEDTMTEL…RLEEMREQME (176 aa). Methionine 139 is modified (methionine sulfoxide). Serine 143 is subject to Phosphoserine. The tract at residues 154 to 164 is LDL and other lipoprotein receptors binding; the sequence is HLRKLRKRLMR. 158–161 provides a ligand contact to heparin; it reads LRKR. Residues 206-286 are lipid-binding and lipoprotein association; it reads TANLGAGAGK…GWFEPLVEDM (81 aa). A heparin-binding site is contributed by 225 to 232; sequence GARIRGRL. Residues 262 to 316 are homooligomerization; sequence QQMRLQAEIFQARLKGWFEPLVEDMQRQWANLVEKIQASVAANPIPPSSVPQESP. Residues 274–286 are specificity for association with VLDL; it reads RLKGWFEPLVEDM.

Belongs to the apolipoprotein A1/A4/E family. In terms of assembly, homotetramer. May interact with ABCA1; functionally associated with ABCA1 in the biogenesis of HDLs. May interact with APP/A4 amyloid-beta peptide; the interaction is extremely stable in vitro but its physiological significance is unclear. May interact with MAPT. May interact with MAP2. In the cerebrospinal fluid, interacts with secreted SORL1. Interacts with PMEL; this allows the loading of PMEL luminal fragment on ILVs to induce fibril nucleation. In terms of processing, APOE exists as multiple glycosylated and sialylated glycoforms within cells and in plasma. The extent of glycosylation and sialylation are tissue and context specific. Glycated in plasma VLDL. Post-translationally, phosphorylated by FAM20C in the extracellular medium.

It localises to the secreted. Its subcellular location is the extracellular space. The protein resides in the extracellular matrix. The protein localises to the extracellular vesicle. It is found in the endosome. It localises to the multivesicular body. In terms of biological role, APOE is an apolipoprotein, a protein associating with lipid particles, that mainly functions in lipoprotein-mediated lipid transport between organs via the plasma and interstitial fluids. APOE is a core component of plasma lipoproteins and is involved in their production, conversion and clearance. Apolipoproteins are amphipathic molecules that interact both with lipids of the lipoprotein particle core and the aqueous environment of the plasma. As such, APOE associates with chylomicrons, chylomicron remnants, very low density lipoproteins (VLDL) and intermediate density lipoproteins (IDL) but shows a preferential binding to high-density lipoproteins (HDL). It also binds a wide range of cellular receptors including the LDL receptor/LDLR, the LDL receptor-related proteins LRP1, LRP2 and LRP8 and the very low-density lipoprotein receptor/VLDLR that mediate the cellular uptake of the APOE-containing lipoprotein particles. Finally, APOE also has a heparin-binding activity and binds heparan-sulfate proteoglycans on the surface of cells, a property that supports the capture and the receptor-mediated uptake of APOE-containing lipoproteins by cells. A main function of APOE is to mediate lipoprotein clearance through the uptake of chylomicrons, VLDLs, and HDLs by hepatocytes. APOE is also involved in the biosynthesis by the liver of VLDLs as well as their uptake by peripheral tissues ensuring the delivery of triglycerides and energy storage in muscle, heart and adipose tissues. By participating in the lipoprotein-mediated distribution of lipids among tissues, APOE plays a critical role in plasma and tissues lipid homeostasis. APOE is also involved in two steps of reverse cholesterol transport, the HDLs-mediated transport of cholesterol from peripheral tissues to the liver, and thereby plays an important role in cholesterol homeostasis. First, it is functionally associated with ABCA1 in the biogenesis of HDLs in tissues. Second, it is enriched in circulating HDLs and mediates their uptake by hepatocytes. APOE also plays an important role in lipid transport in the central nervous system, regulating neuron survival and sprouting. The sequence is that of Apolipoprotein E (Apoe) from Peromyscus leucopus (White-footed mouse).